We begin with the raw amino-acid sequence, 353 residues long: Phosphate acyltransferase (353 aa).

This sequence belongs to the PlsX family. As to quaternary structure, homodimer. Probably interacts with PlsY.

Its subcellular location is the cytoplasm. It catalyses the reaction a fatty acyl-[ACP] + phosphate = an acyl phosphate + holo-[ACP]. The protein operates within lipid metabolism; phospholipid metabolism. Catalyzes the reversible formation of acyl-phosphate (acyl-PO(4)) from acyl-[acyl-carrier-protein] (acyl-ACP). This enzyme utilizes acyl-ACP as fatty acyl donor, but not acyl-CoA. The sequence is that of Phosphate acyltransferase from Rhodopseudomonas palustris (strain HaA2).